We begin with the raw amino-acid sequence, 89 residues long: Small ribosomal subunit protein uS15 (89 aa).

Belongs to the universal ribosomal protein uS15 family. As to quaternary structure, part of the 30S ribosomal subunit. Forms a bridge to the 50S subunit in the 70S ribosome, contacting the 23S rRNA.

One of the primary rRNA binding proteins, it binds directly to 16S rRNA where it helps nucleate assembly of the platform of the 30S subunit by binding and bridging several RNA helices of the 16S rRNA. In terms of biological role, forms an intersubunit bridge (bridge B4) with the 23S rRNA of the 50S subunit in the ribosome. The protein is Small ribosomal subunit protein uS15 of Limosilactobacillus reuteri (strain DSM 20016) (Lactobacillus reuteri).